Here is a 400-residue protein sequence, read N- to C-terminus: Selection and upkeep of intraepithelial T-cells protein 2 (400 aa).

Positions Met-1–Ser-21 are cleaved as a signal peptide. Residues Ser-22–Arg-240 are Extracellular-facing. The 111-residue stretch at Glu-23–Thr-133 folds into the Ig-like V-type domain. Disulfide bonds link Cys-46-Cys-120 and Cys-160-Cys-214. Residues Ala-139–Glu-225 form the Ig-like C1-type domain. An N-linked (GlcNAc...) asparagine glycan is attached at Asn-197. A helical transmembrane segment spans residues Val-241–Cys-261. Residues Val-262–Lys-280 are Cytoplasmic-facing. Residues Ser-281–Leu-301 form a helical membrane-spanning segment. Over Lys-302–Asp-321 the chain is Extracellular. The helical transmembrane segment at Ile-322–Phe-342 threads the bilayer. The Cytoplasmic segment spans residues Arg-343–Phe-400.

This sequence belongs to the SKINT family. In terms of tissue distribution, expressed in skin, thymus and mammary gland.

It localises to the membrane. Functionally, may act by engaging a cell surface molecule on immature T-cells in the embryonic thymus. This chain is Selection and upkeep of intraepithelial T-cells protein 2 (Skint2), found in Mus musculus (Mouse).